The following is a 285-amino-acid chain: GTP-binding protein 8 (285 aa).

Residues 110-283 (QQPEVCFIGR…KCFIADITGS (174 aa)) enclose the EngB-type G domain. GTP-binding positions include 118–125 (GRSNVGKS), 147–151 (GHTKK), 165–168 (DMPG), 227–230 (TKID), and 262–264 (ISA). Mg(2+)-binding residues include S125 and T149.

It belongs to the TRAFAC class TrmE-Era-EngA-EngB-Septin-like GTPase superfamily. EngB GTPase family. Mg(2+) is required as a cofactor.

In Mus musculus (Mouse), this protein is GTP-binding protein 8 (Gtpbp8).